We begin with the raw amino-acid sequence, 145 residues long: 3-hydroxyacyl-[acyl-carrier-protein] dehydratase FabZ (145 aa).

H49 is a catalytic residue.

It belongs to the thioester dehydratase family. FabZ subfamily.

The protein localises to the cytoplasm. It catalyses the reaction a (3R)-hydroxyacyl-[ACP] = a (2E)-enoyl-[ACP] + H2O. Functionally, involved in unsaturated fatty acids biosynthesis. Catalyzes the dehydration of short chain beta-hydroxyacyl-ACPs and long chain saturated and unsaturated beta-hydroxyacyl-ACPs. This chain is 3-hydroxyacyl-[acyl-carrier-protein] dehydratase FabZ, found in Rickettsia massiliae (strain Mtu5).